Consider the following 434-residue polypeptide: 3-phosphoshikimate 1-carboxyvinyltransferase (434 aa).

Lysine 22, serine 23, and arginine 27 together coordinate 3-phosphoshikimate. Lysine 22 contributes to the phosphoenolpyruvate binding site. Glycine 93 and arginine 121 together coordinate phosphoenolpyruvate. 3-phosphoshikimate is bound by residues serine 168, serine 169, glutamine 170, serine 199, aspartate 320, and lysine 347. Glutamine 170 is a phosphoenolpyruvate binding site. The active-site Proton acceptor is the aspartate 320. Residues arginine 351, arginine 394, and lysine 419 each contribute to the phosphoenolpyruvate site.

Belongs to the EPSP synthase family. Monomer.

It is found in the cytoplasm. It carries out the reaction 3-phosphoshikimate + phosphoenolpyruvate = 5-O-(1-carboxyvinyl)-3-phosphoshikimate + phosphate. The protein operates within metabolic intermediate biosynthesis; chorismate biosynthesis; chorismate from D-erythrose 4-phosphate and phosphoenolpyruvate: step 6/7. In terms of biological role, catalyzes the transfer of the enolpyruvyl moiety of phosphoenolpyruvate (PEP) to the 5-hydroxyl of shikimate-3-phosphate (S3P) to produce enolpyruvyl shikimate-3-phosphate and inorganic phosphate. The sequence is that of 3-phosphoshikimate 1-carboxyvinyltransferase from Burkholderia orbicola (strain AU 1054).